Consider the following 225-residue polypeptide: ATP-dependent Clp protease proteolytic subunit (225 aa).

The Nucleophile role is filled by S101. Residue H126 is part of the active site.

It belongs to the peptidase S14 family. As to quaternary structure, component of the chloroplastic Clp protease core complex.

It localises to the plastid. Its subcellular location is the chloroplast stroma. The catalysed reaction is Hydrolysis of proteins to small peptides in the presence of ATP and magnesium. alpha-casein is the usual test substrate. In the absence of ATP, only oligopeptides shorter than five residues are hydrolyzed (such as succinyl-Leu-Tyr-|-NHMec, and Leu-Tyr-Leu-|-Tyr-Trp, in which cleavage of the -Tyr-|-Leu- and -Tyr-|-Trp bonds also occurs).. In terms of biological role, cleaves peptides in various proteins in a process that requires ATP hydrolysis. Has a chymotrypsin-like activity. Plays a major role in the degradation of misfolded proteins. This Chlorokybus atmophyticus (Soil alga) protein is ATP-dependent Clp protease proteolytic subunit.